Consider the following 245-residue polypeptide: NAD-dependent protein deacylase (245 aa).

Residues 1–245 enclose the Deacetylase sirtuin-type domain; the sequence is MEAVWESARI…RLSRAMGIDI (245 aa). 22-41 provides a ligand contact to NAD(+); it reads GAGISAESGIPTFRGKDGLW. The substrate site is built by tyrosine 66 and arginine 69. 100-103 lines the NAD(+) pocket; the sequence is QNVD. The active-site Proton acceptor is histidine 118. The Zn(2+) site is built by cysteine 126, cysteine 129, cysteine 146, and cysteine 149. Residues 186 to 188, 212 to 214, and methionine 241 each bind NAD(+); these read GTS and NPE.

The protein belongs to the sirtuin family. Class III subfamily. Zn(2+) serves as cofactor.

The protein resides in the cytoplasm. The catalysed reaction is N(6)-acetyl-L-lysyl-[protein] + NAD(+) + H2O = 2''-O-acetyl-ADP-D-ribose + nicotinamide + L-lysyl-[protein]. The enzyme catalyses N(6)-succinyl-L-lysyl-[protein] + NAD(+) + H2O = 2''-O-succinyl-ADP-D-ribose + nicotinamide + L-lysyl-[protein]. Its function is as follows. NAD-dependent lysine deacetylase and desuccinylase that specifically removes acetyl and succinyl groups on target proteins. Modulates the activities of several proteins which are inactive in their acylated form. Deacetylates the N-terminal lysine residue of Alba, the major archaeal chromatin protein and that, in turn, increases Alba's DNA binding affinity, thereby repressing transcription. This chain is NAD-dependent protein deacylase, found in Aeropyrum pernix (strain ATCC 700893 / DSM 11879 / JCM 9820 / NBRC 100138 / K1).